We begin with the raw amino-acid sequence, 316 residues long: Initiation factor TFIIB homolog (316 aa).

Belongs to the asfivirus C315R family.

Putative initation factor. The protein is Initiation factor TFIIB homolog of Ornithodoros (relapsing fever ticks).